Consider the following 695-residue polypeptide: Polyribonucleotide nucleotidyltransferase (695 aa).

Mg(2+) is bound by residues Asp-486 and Asp-492. The KH domain maps to 553–612 (PRIETMQINTSKIATVIGPGGKQIRQIIERSGAQVDINDDGVINIAASTQESINKAKELI). Positions 622–690 (GKVYNGRVTS…EKGQLKLSHK (69 aa)) constitute an S1 motif domain.

It belongs to the polyribonucleotide nucleotidyltransferase family. The cofactor is Mg(2+).

It localises to the cytoplasm. It catalyses the reaction RNA(n+1) + phosphate = RNA(n) + a ribonucleoside 5'-diphosphate. In terms of biological role, involved in mRNA degradation. Catalyzes the phosphorolysis of single-stranded polyribonucleotides processively in the 3'- to 5'-direction. The chain is Polyribonucleotide nucleotidyltransferase from Chlamydia trachomatis serovar D (strain ATCC VR-885 / DSM 19411 / UW-3/Cx).